Reading from the N-terminus, the 316-residue chain is Apolipoprotein E (316 aa).

An N-terminal signal peptide occupies residues 1–18 (MKVLWVAVVVALLAGCQA). The O-linked (GalNAc...) threonine glycan is linked to Thr-32. 8 tandem repeats follow at residues 79 to 100 (ALME…GQLG), 101 to 122 (PMAQ…ARLG), 123 to 144 (SDME…AMLG), 145 to 166 (QSTE…KRLL), 167 to 188 (RDAD…EGAE), 189 to 210 (RSLS…SRAA), 211 to 232 (TLST…QKLH), and 233 to 254 (GRLE…QQLE). The 8 X 22 AA approximate tandem repeats stretch occupies residues 79–254 (ALMEETMKEV…RLDKIRQQLE (176 aa)). Methionine sulfoxide is present on Met-142. Ser-146 is subject to Phosphoserine. The tract at residues 157-167 (HLRKLPKRLLR) is LDL and other lipoprotein receptors binding. 161–164 (LPKR) is a binding site for heparin. Residues 209-289 (AATLSTLAGQ…SWFEPLVEDM (81 aa)) are lipid-binding and lipoprotein association. An O-linked (GalNAc...) threonine glycan is attached at Thr-211. 228–235 (RQKLHGRL) provides a ligand contact to heparin. The tract at residues 265–316 (NQMRLQAEAFQARLRSWFEPLVEDMQRQWAGLVEKVQLALRPSPTSPPSENH) is homooligomerization. Residues 277 to 289 (RLRSWFEPLVEDM) form a specificity for association with VLDL region. A glycan (O-linked (GalNAc...) threonine) is linked at Thr-309. An O-linked (GalNAc...) serine glycan is attached at Ser-310.

Belongs to the apolipoprotein A1/A4/E family. As to quaternary structure, homotetramer. May interact with ABCA1; functionally associated with ABCA1 in the biogenesis of HDLs. May interact with APP/A4 amyloid-beta peptide; the interaction is extremely stable in vitro but its physiological significance is unclear. May interact with MAPT. May interact with MAP2. In the cerebrospinal fluid, interacts with secreted SORL1. Interacts with PMEL; this allows the loading of PMEL luminal fragment on ILVs to induce fibril nucleation. APOE exists as multiple glycosylated and sialylated glycoforms within cells and in plasma. The extent of glycosylation and sialylation are tissue and context specific. Post-translationally, glycated in plasma VLDL. In terms of processing, phosphorylated by FAM20C in the extracellular medium.

The protein localises to the secreted. Its subcellular location is the extracellular space. The protein resides in the extracellular matrix. It is found in the extracellular vesicle. It localises to the endosome. The protein localises to the multivesicular body. APOE is an apolipoprotein, a protein associating with lipid particles, that mainly functions in lipoprotein-mediated lipid transport between organs via the plasma and interstitial fluids. APOE is a core component of plasma lipoproteins and is involved in their production, conversion and clearance. Apolipoproteins are amphipathic molecules that interact both with lipids of the lipoprotein particle core and the aqueous environment of the plasma. As such, APOE associates with chylomicrons, chylomicron remnants, very low density lipoproteins (VLDL) and intermediate density lipoproteins (IDL) but shows a preferential binding to high-density lipoproteins (HDL). It also binds a wide range of cellular receptors including the LDL receptor/LDLR and the very low-density lipoprotein receptor/VLDLR that mediate the cellular uptake of the APOE-containing lipoprotein particles. Finally, APOE also has a heparin-binding activity and binds heparan-sulfate proteoglycans on the surface of cells, a property that supports the capture and the receptor-mediated uptake of APOE-containing lipoproteins by cells. The sequence is that of Apolipoprotein E (APOE) from Bos taurus (Bovine).